The chain runs to 602 residues: Glutamyl-tRNA(Gln) amidotransferase subunit B, mitochondrial (602 aa).

The N-terminal 56 residues, methionine 1–threonine 56, are a transit peptide targeting the mitochondrion.

It belongs to the GatB/GatE family. GatB subfamily. As to quaternary structure, subunit of the heterotrimeric GatCAB amidotransferase (AdT) complex, composed of A, B and C subunits.

The protein resides in the mitochondrion. It catalyses the reaction L-glutamyl-tRNA(Gln) + L-glutamine + ATP + H2O = L-glutaminyl-tRNA(Gln) + L-glutamate + ADP + phosphate + H(+). Allows the formation of correctly charged Gln-tRNA(Gln) through the transamidation of misacylated Glu-tRNA(Gln) in the mitochondria. The reaction takes place in the presence of glutamine and ATP through an activated gamma-phospho-Glu-tRNA(Gln). This Emericella nidulans (strain FGSC A4 / ATCC 38163 / CBS 112.46 / NRRL 194 / M139) (Aspergillus nidulans) protein is Glutamyl-tRNA(Gln) amidotransferase subunit B, mitochondrial (nempA).